The primary structure comprises 154 residues: 3-hydroxyacyl-[acyl-carrier-protein] dehydratase FabZ (154 aa).

Residue H55 is part of the active site.

Belongs to the thioester dehydratase family. FabZ subfamily.

It is found in the cytoplasm. The catalysed reaction is a (3R)-hydroxyacyl-[ACP] = a (2E)-enoyl-[ACP] + H2O. Involved in unsaturated fatty acids biosynthesis. Catalyzes the dehydration of short chain beta-hydroxyacyl-ACPs and long chain saturated and unsaturated beta-hydroxyacyl-ACPs. This is 3-hydroxyacyl-[acyl-carrier-protein] dehydratase FabZ from Nitratidesulfovibrio vulgaris (strain DSM 19637 / Miyazaki F) (Desulfovibrio vulgaris).